The following is a 392-amino-acid chain: Aspartate aminotransferase (392 aa).

The L-aspartate site is built by Gly-40, Trp-126, and Asn-176. N6-(pyridoxal phosphate)lysine is present on Lys-239.

Belongs to the class-I pyridoxal-phosphate-dependent aminotransferase family. In terms of assembly, homodimer. Pyridoxal 5'-phosphate serves as cofactor.

The protein localises to the cytoplasm. It carries out the reaction L-aspartate + 2-oxoglutarate = oxaloacetate + L-glutamate. This Bacillus sp. (strain YM-2) protein is Aspartate aminotransferase.